Here is a 599-residue protein sequence, read N- to C-terminus: UvrABC system protein C (599 aa).

One can recognise a GIY-YIG domain in the interval 19–95 (ESTGVYIFYD…IKKYRPIMNV (77 aa)). In terms of domain architecture, UVR spans 206–241 (EEIIEKLYDQMQEYSKNLEFEKAAKIRDKIRLLQNL).

Belongs to the UvrC family. As to quaternary structure, interacts with UvrB in an incision complex.

The protein resides in the cytoplasm. The UvrABC repair system catalyzes the recognition and processing of DNA lesions. UvrC both incises the 5' and 3' sides of the lesion. The N-terminal half is responsible for the 3' incision and the C-terminal half is responsible for the 5' incision. The sequence is that of UvrABC system protein C from Dictyoglomus thermophilum (strain ATCC 35947 / DSM 3960 / H-6-12).